A 68-amino-acid polypeptide reads, in one-letter code: Large ribosomal subunit protein uL30 (68 aa).

It belongs to the universal ribosomal protein uL30 family. In terms of assembly, part of the 50S ribosomal subunit.

The polypeptide is Large ribosomal subunit protein uL30 (Kocuria rhizophila (strain ATCC 9341 / DSM 348 / NBRC 103217 / DC2201)).